The chain runs to 346 residues: Mannonate dehydratase (346 aa).

It belongs to the mannonate dehydratase family. Fe(2+) is required as a cofactor. It depends on Mn(2+) as a cofactor.

It carries out the reaction D-mannonate = 2-dehydro-3-deoxy-D-gluconate + H2O. It participates in carbohydrate metabolism; pentose and glucuronate interconversion. Its function is as follows. Catalyzes the dehydration of D-mannonate. This is Mannonate dehydratase from Cupriavidus taiwanensis (strain DSM 17343 / BCRC 17206 / CCUG 44338 / CIP 107171 / LMG 19424 / R1) (Ralstonia taiwanensis (strain LMG 19424)).